A 62-amino-acid polypeptide reads, in one-letter code: Photosystem II reaction center protein Z (62 aa).

2 helical membrane passes run 8–28 (LVSILILLSFALVVGVPVILV) and 41–61 (YASAGLWFGLVIVTAAFNSFV).

The protein belongs to the PsbZ family. In terms of assembly, PSII is composed of 1 copy each of membrane proteins PsbA, PsbB, PsbC, PsbD, PsbE, PsbF, PsbH, PsbI, PsbJ, PsbK, PsbL, PsbM, PsbT, PsbX, PsbY, PsbZ, Psb30/Ycf12, at least 3 peripheral proteins of the oxygen-evolving complex and a large number of cofactors. It forms dimeric complexes.

It is found in the plastid. Its subcellular location is the chloroplast thylakoid membrane. Its function is as follows. May control the interaction of photosystem II (PSII) cores with the light-harvesting antenna, regulates electron flow through the 2 photosystem reaction centers. PSII is a light-driven water plastoquinone oxidoreductase, using light energy to abstract electrons from H(2)O, generating a proton gradient subsequently used for ATP formation. The chain is Photosystem II reaction center protein Z from Guillardia theta (Cryptophyte).